The chain runs to 88 residues: Translation initiation factor IF-1 1 (88 aa).

The 72-residue stretch at Met1 to Lys72 folds into the S1-like domain.

The protein belongs to the IF-1 family. In terms of assembly, component of the 30S ribosomal translation pre-initiation complex which assembles on the 30S ribosome in the order IF-2 and IF-3, IF-1 and N-formylmethionyl-tRNA(fMet); mRNA recruitment can occur at any time during PIC assembly.

The protein localises to the cytoplasm. In terms of biological role, one of the essential components for the initiation of protein synthesis. Stabilizes the binding of IF-2 and IF-3 on the 30S subunit to which N-formylmethionyl-tRNA(fMet) subsequently binds. Helps modulate mRNA selection, yielding the 30S pre-initiation complex (PIC). Upon addition of the 50S ribosomal subunit IF-1, IF-2 and IF-3 are released leaving the mature 70S translation initiation complex. This Burkholderia mallei (strain ATCC 23344) protein is Translation initiation factor IF-1 1.